A 213-amino-acid polypeptide reads, in one-letter code: NADH-quinone oxidoreductase subunit C (213 aa).

This sequence belongs to the complex I 30 kDa subunit family. As to quaternary structure, NDH-1 is composed of 15 different subunits. Subunits NuoB, C, D, E, F, and G constitute the peripheral sector of the complex.

The protein localises to the cell membrane. It carries out the reaction a quinone + NADH + 5 H(+)(in) = a quinol + NAD(+) + 4 H(+)(out). In terms of biological role, NDH-1 shuttles electrons from NADH, via FMN and iron-sulfur (Fe-S) centers, to quinones in the respiratory chain. The immediate electron acceptor for the enzyme in this species is believed to be a menaquinone. Couples the redox reaction to proton translocation (for every two electrons transferred, four hydrogen ions are translocated across the cytoplasmic membrane), and thus conserves the redox energy in a proton gradient. The chain is NADH-quinone oxidoreductase subunit C from Deinococcus geothermalis (strain DSM 11300 / CIP 105573 / AG-3a).